Here is a 236-residue protein sequence, read N- to C-terminus: CBS domain-containing protein CBSX1, chloroplastic (236 aa).

A chloroplast-targeting transit peptide spans 1–53 (MDAVLYSVPLSFTPLRASSSPSSPYLLLPRFLSVQPCHKFTFSRSFPSKSRIP). Residues 47 to 66 (PSKSRIPSASSAAGSTLMTN) are disordered. Serine 54 is subject to N-acetylserine. 2 CBS domains span residues 81-142 (MTKK…GRTE) and 175-231 (MTPA…IKRS).

The protein resides in the plastid. It localises to the chloroplast. This Arabidopsis thaliana (Mouse-ear cress) protein is CBS domain-containing protein CBSX1, chloroplastic (CBSX1).